We begin with the raw amino-acid sequence, 301 residues long: Ribonuclease Z (301 aa).

7 residues coordinate Zn(2+): His-60, His-62, Asp-64, His-65, His-137, Asp-207, and His-265. Asp-64 serves as the catalytic Proton acceptor.

It belongs to the RNase Z family. Homodimer. Zn(2+) serves as cofactor.

The catalysed reaction is Endonucleolytic cleavage of RNA, removing extra 3' nucleotides from tRNA precursor, generating 3' termini of tRNAs. A 3'-hydroxy group is left at the tRNA terminus and a 5'-phosphoryl group is left at the trailer molecule.. Functionally, zinc phosphodiesterase, which displays some tRNA 3'-processing endonuclease activity. Probably involved in tRNA maturation, by removing a 3'-trailer from precursor tRNA. This is Ribonuclease Z from Exiguobacterium sp. (strain ATCC BAA-1283 / AT1b).